Consider the following 509-residue polypeptide: Glutamyl-tRNA(Gln) amidotransferase subunit A (509 aa).

Residues K75 and S150 each act as charge relay system in the active site. Catalysis depends on S174, which acts as the Acyl-ester intermediate. A disordered region spans residues 471–509 (DWHKRRPPLGQPPLEQAQGTAQQPKAKSKSTKGSKKSKS). Residues 496–509 (AKSKSTKGSKKSKS) show a composition bias toward basic residues.

It belongs to the amidase family. GatA subfamily. Heterotrimer of A, B and C subunits.

The enzyme catalyses L-glutamyl-tRNA(Gln) + L-glutamine + ATP + H2O = L-glutaminyl-tRNA(Gln) + L-glutamate + ADP + phosphate + H(+). Functionally, allows the formation of correctly charged Gln-tRNA(Gln) through the transamidation of misacylated Glu-tRNA(Gln) in organisms which lack glutaminyl-tRNA synthetase. The reaction takes place in the presence of glutamine and ATP through an activated gamma-phospho-Glu-tRNA(Gln). In Synechococcus sp. (strain JA-3-3Ab) (Cyanobacteria bacterium Yellowstone A-Prime), this protein is Glutamyl-tRNA(Gln) amidotransferase subunit A.